Reading from the N-terminus, the 134-residue chain is Protein PsiE homolog (134 aa).

4 helical membrane passes run 14 to 34 (LQWI…IFLI), 56 to 76 (VESI…IKYF), 82 to 102 (FPLR…IIVS), and 106 to 126 (PMET…LYIS).

The protein belongs to the PsiE family.

The protein localises to the cell membrane. This is Protein PsiE homolog from Bacillus anthracis.